Consider the following 303-residue polypeptide: Coenzyme PQQ synthesis protein B (303 aa).

Belongs to the PqqB family.

Its pathway is cofactor biosynthesis; pyrroloquinoline quinone biosynthesis. Functionally, may be involved in the transport of PQQ or its precursor to the periplasm. The protein is Coenzyme PQQ synthesis protein B of Pseudomonas fluorescens (strain Pf0-1).